The following is a 470-amino-acid chain: Desmin (470 aa).

Residues 2 to 108 (SQAYSSSQRV…QEFLTTRTNE (107 aa)) are head. Ser-7 bears the Phosphoserine; by CDK1 mark. Ser-12 carries the phosphoserine; by AURKB modification. Arg-16 carries the post-translational modification Omega-N-methylarginine. Thr-17 is modified (phosphothreonine; by AURKB and ROCK1). Position 28 is a phosphoserine; by CDK1 (Ser-28). At Ser-31 the chain carries Phosphoserine. Ser-32 bears the Phosphoserine; by CDK1 mark. Arg-37 carries the post-translational modification Asymmetric dimethylarginine; alternate. Arg-37 is modified (omega-N-methylarginine; alternate). Residue Ser-45 is modified to Phosphoserine. Arg-58 carries the post-translational modification ADP-ribosylarginine. At Ser-60 the chain carries Phosphoserine; by AURKB. Position 70 is an omega-N-methylarginine (Arg-70). Phosphothreonine; by ROCK1 is present on Thr-77. Ser-81 bears the Phosphoserine mark. The region spanning 108-416 (EKVELQELND…KLLEGEESRI (309 aa)) is the IF rod domain. The segment at 109–141 (KVELQELNDRFANYIEKVRFLEQQNAALAAEVN) is coil 1A. The interval 142 to 151 (RLKGREPTRV) is linker 1. The tract at residues 152–252 (AEIYEEELRE…HEEEIRELQA (101 aa)) is coil 1B. The linker 12 stretch occupies residues 253-268 (QLQEQQVQVEMDMSKP). The interval 268–415 (PDLTAALRDI…RKLLEGEESR (148 aa)) is interaction with NEB. The interval 269–287 (DLTAALRDIRAQYETIAAK) is coil 2A. The segment at 288–295 (NISEAEEW) is linker 2. Ser-290, Ser-358, Ser-361, and Ser-424 each carry phosphoserine. The coil 2B stretch occupies residues 296 to 412 (YKSKVSDLTQ…ATYRKLLEGE (117 aa)). A tail region spans residues 413-470 (ESRINLPIQTFSALNFRETSPEQRGSEVHTKKTVMIKTIETRDGEVVSEATQQQHEVL). The tract at residues 438–453 (SEVHTKKTVMIKTIET) is interaction with CRYAB.

The protein belongs to the intermediate filament family. As to quaternary structure, homomer. Interacts with DST. Interacts with MTM1. Interacts with EPPK1; interaction is dependent of higher-order structure of intermediate filament. Interacts with CRYAB. Interacts with NEB (via nebulin repeats 160-164). Interacts (via rod region) with NEBL (via nebulin repeats 1-5). Interacts with ASB2; the interaction targets DES for proteasomal degradation. Interacts with PKP1. Interacts with FLII. ADP-ribosylation prevents ability to form intermediate filaments. In terms of processing, phosphorylation at Ser-7, Ser-28 and Ser-32 by CDK1 and phosphorylation at Ser-60 by AURKB contribute to efficient separation of desmin intermediate filaments during mitosis. Post-translationally, ubiquitination by a SCF-like complex containing ASB2 leads to proteasomal degradation.

The protein localises to the cytoplasm. It localises to the myofibril. Its subcellular location is the sarcomere. The protein resides in the z line. It is found in the cell membrane. The protein localises to the sarcolemma. It localises to the nucleus. Its subcellular location is the cell tip. The protein resides in the nucleus envelope. In terms of biological role, muscle-specific type III intermediate filament essential for proper muscular structure and function. Plays a crucial role in maintaining the structure of sarcomeres, inter-connecting the Z-disks and forming the myofibrils, linking them not only to the sarcolemmal cytoskeleton, but also to the nucleus and mitochondria, thus providing strength for the muscle fiber during activity. In adult striated muscle they form a fibrous network connecting myofibrils to each other and to the plasma membrane from the periphery of the Z-line structures. May act as a sarcomeric microtubule-anchoring protein: specifically associates with detyrosinated tubulin-alpha chains, leading to buckled microtubules and mechanical resistance to contraction. Required for nuclear membrane integrity, via anchoring at the cell tip and nuclear envelope, resulting in maintenance of microtubule-derived intracellular mechanical forces. Contributes to the transcriptional regulation of the NKX2-5 gene in cardiac progenitor cells during a short period of cardiomyogenesis and in cardiac side population stem cells in the adult. Plays a role in maintaining an optimal conformation of nebulette (NEB) on heart muscle sarcomeres to bind and recruit cardiac alpha-actin. This Bos taurus (Bovine) protein is Desmin (DES).